Here is a 322-residue protein sequence, read N- to C-terminus: Formimidoylglutamase (322 aa).

Mn(2+) contacts are provided by His130, Asp156, His158, Asp160, Cys245, and Asp247.

Belongs to the arginase family. Mn(2+) serves as cofactor.

It carries out the reaction N-formimidoyl-L-glutamate + H2O = formamide + L-glutamate. Its pathway is amino-acid degradation; L-histidine degradation into L-glutamate; L-glutamate from N-formimidoyl-L-glutamate (hydrolase route): step 1/1. Its function is as follows. Catalyzes the conversion of N-formimidoyl-L-glutamate to L-glutamate and formamide. This Lysinibacillus sphaericus (strain C3-41) protein is Formimidoylglutamase.